Consider the following 479-residue polypeptide: UDP-N-acetylmuramoyl-L-alanyl-D-glutamate--2,6-diaminopimelate ligase (479 aa).

Ser21 is a UDP-N-acetyl-alpha-D-muramoyl-L-alanyl-D-glutamate binding site. Position 98 to 104 (98 to 104 (GTNGKSS)) interacts with ATP. Residues 144–145 (TT), Ser171, Gln177, and Arg179 contribute to the UDP-N-acetyl-alpha-D-muramoyl-L-alanyl-D-glutamate site. Lys211 carries the post-translational modification N6-carboxylysine. Residues Arg372, 396–399 (DNPR), Gly446, and Glu450 contribute to the meso-2,6-diaminopimelate site. The Meso-diaminopimelate recognition motif signature appears at 396–399 (DNPR).

Belongs to the MurCDEF family. MurE subfamily. Requires Mg(2+) as cofactor. Post-translationally, carboxylation is probably crucial for Mg(2+) binding and, consequently, for the gamma-phosphate positioning of ATP.

Its subcellular location is the cytoplasm. It carries out the reaction UDP-N-acetyl-alpha-D-muramoyl-L-alanyl-D-glutamate + meso-2,6-diaminopimelate + ATP = UDP-N-acetyl-alpha-D-muramoyl-L-alanyl-gamma-D-glutamyl-meso-2,6-diaminopimelate + ADP + phosphate + H(+). It participates in cell wall biogenesis; peptidoglycan biosynthesis. Catalyzes the addition of meso-diaminopimelic acid to the nucleotide precursor UDP-N-acetylmuramoyl-L-alanyl-D-glutamate (UMAG) in the biosynthesis of bacterial cell-wall peptidoglycan. This chain is UDP-N-acetylmuramoyl-L-alanyl-D-glutamate--2,6-diaminopimelate ligase, found in Rickettsia rickettsii.